The sequence spans 129 residues: Phosphoribosyl-AMP cyclohydrolase (129 aa).

Aspartate 84 is a Mg(2+) binding site. Cysteine 85 contributes to the Zn(2+) binding site. Residues aspartate 86 and aspartate 88 each coordinate Mg(2+). Zn(2+) is bound by residues cysteine 101 and cysteine 108.

This sequence belongs to the PRA-CH family. As to quaternary structure, homodimer. Requires Mg(2+) as cofactor. Zn(2+) serves as cofactor.

It is found in the cytoplasm. The enzyme catalyses 1-(5-phospho-beta-D-ribosyl)-5'-AMP + H2O = 1-(5-phospho-beta-D-ribosyl)-5-[(5-phospho-beta-D-ribosylamino)methylideneamino]imidazole-4-carboxamide. It functions in the pathway amino-acid biosynthesis; L-histidine biosynthesis; L-histidine from 5-phospho-alpha-D-ribose 1-diphosphate: step 3/9. Catalyzes the hydrolysis of the adenine ring of phosphoribosyl-AMP. This chain is Phosphoribosyl-AMP cyclohydrolase, found in Halobacterium salinarum (strain ATCC 700922 / JCM 11081 / NRC-1) (Halobacterium halobium).